The following is a 205-amino-acid chain: Max-like protein homolog 2 (205 aa).

Low complexity-rich tracts occupy residues 1–12 and 26–40; these read MSRSRSAAASSS and SASS…ATNS. The segment at 1–58 is disordered; the sequence is MSRSRSAAASSSQKPDDMDLMSPDGSASSPSAPNTPATNSGGFSSDRKKATHLRCERQ. Over residues 45–58 the composition is skewed to basic and acidic residues; that stretch reads SDRKKATHLRCERQ. The segment at 47–60 is basic motif; that stretch reads RKKATHLRCERQRR. In terms of domain architecture, bHLH spans 47 to 101; that stretch reads RKKATHLRCERQRREAINSGYSDLKDLIPQTTTSLGCKTTNAAILFRACDFMSQL. Residues 61–101 form a helix-loop-helix motif region; it reads EAINSGYSDLKDLIPQTTTSLGCKTTNAAILFRACDFMSQL. Residues 98–132 are a coiled coil; that stretch reads MSQLKTDISDADKQLAQLNAQAAALEMIASEYEQM.

As to expression, widely expressed.

Its subcellular location is the nucleus. It localises to the cytoplasm. The protein localises to the mitochondrion. Transcription factor. Binds to the E box motif 5'-CACGTG-3', probably in a heterodimeric complex with mml-1. Involved in modulating longevity in response to TOR signaling, dietary restriction, the decline in protein homeostasis associated with normal aging, germline signaling and the insulin-like signaling pathway. Plays a role in autophagy. Involved in regulating migration of the ray 1 precursor cells in the male tail, acting in concert with Wnt and semaphorin signaling pathways. Regulates transcription of genes encoding extracellular matrix (ECM) components which may contribute to the substratum required for migration of the neighboring ray 1 precursor cells. Required for resistance to oxidative stress. Involved in promoting infection by the microsporidian pathogen N.parisii, probably acting independently of its canonical partner, mml-1. The protein is Max-like protein homolog 2 of Caenorhabditis elegans.